Here is a 161-residue protein sequence, read N- to C-terminus: Heme transporter hrg-6 (161 aa).

The next 4 membrane-spanning stretches (helical) occupy residues 13-33 (IAYT…YIFA), 38-58 (VALA…YFYL), 75-95 (VLFW…ITAI), and 115-135 (WWST…NAFI).

It belongs to the HRG family.

Its subcellular location is the membrane. Functionally, heme transporter. The sequence is that of Heme transporter hrg-6 (hrg-6) from Caenorhabditis elegans.